Consider the following 387-residue polypeptide: Methyltransferase phomM (387 aa).

Residues 98–223 are methyltransferase domain; sequence PHRPKDLHIL…QSVADLFTTL (126 aa).

Belongs to the class I-like SAM-binding methyltransferase superfamily. Erg6/SMT family.

It functions in the pathway mycotoxin biosynthesis. Its function is as follows. Methyltransferase; part of the gene cluster that mediates the biosynthesis of the phomopsins, a group of hexapeptide mycotoxins which infects lupins and causes lupinosis disease in livestock. Within the pathway, phomM acts as an S-adenosylmethionine-dependent alpha-N-methyltransferase that catalyzes two successive N-methylation reactions, converting N-desmethyl-phomopsin A to phomopsin A and phomopsin A further to an N,N-dimethylated congener called phomopsin E. The pathway starts with the processing of the precursor phomA by several endopeptidases including kexin proteases as well as the cluster-specific S41 family peptidase phomP1 and the oligopeptidase phomG to produce 10 identical copies of the hexapeptide Tyr-Val-Ile-Pro-Ile-Asp. After being excised from the precursor peptide, the core peptides are cyclized and modified post-translationally by enzymes encoded within the gene cluster. The timing and order of proteolysis of the phomA precursor and PTMs are still unknown. Two tyrosinase-like enzymes, phomQ1 and phomQ2, catalyze the chlorination and hydroxylation of Tyr, respectively. PhomYb, is proposed to be involved in the construction of the macrocyclic structure. The other 4 ustYa family proteins may be involved in PTMs that generate the unique structure of phomopsin A. PhomYa is required for the hydroxylation of C-beta of Tyr. PhomYc, phomYd, and phomYe are responsible for the biosynthesis of 2,3-dehydroisoleucine (dIle), 2,3-dehydroaspartic acid (dAsp), and 3,4-dehydroproline (dPro), respectively. While dIle formation by phomYc is indispensable for the installation of dAsp by phomYd, the order of the other PTMs have not been elucidated yet. Most of the biosynthetic enzymes likely have broad substrate specificity, and thus, there might be a metabolic grid from a precursor to phomopsin A. The enzyme(s) responsible for the biosynthesis of 3,4-dehydrovaline (dVal) have also not been identified yet. Finally, phomM acts as an S-adenosylmethionine-dependent alpha-N-methyltransferase that catalyzes two successive N-methylation reactions, converting N-desmethyl-phomopsin A to phomopsin A and phomopsin A further to an N,N-dimethylated congener called phomopsin E. This chain is Methyltransferase phomM, found in Diaporthe leptostromiformis (Lupinosis disease fungus).